The sequence spans 122 residues: Large ribosomal subunit protein uL14c (122 aa).

It belongs to the universal ribosomal protein uL14 family. As to quaternary structure, part of the 50S ribosomal subunit.

It is found in the plastid. Binds to 23S rRNA. The polypeptide is Large ribosomal subunit protein uL14c (rpl14) (Helicosporidium sp. subsp. Simulium jonesii (Green alga)).